Here is a 433-residue protein sequence, read N- to C-terminus: Signal recognition particle 54 kDa protein (433 aa).

GTP contacts are provided by residues 106-113, 186-190, and 244-247; these read GVEGSGKT, DTAGR, and TKMD.

This sequence belongs to the GTP-binding SRP family. SRP54 subfamily. Part of the signal recognition particle protein translocation system, which is composed of SRP and FtsY. Archaeal SRP consists of a 7S RNA molecule of 300 nucleotides and two protein subunits: SRP54 and SRP19.

The protein localises to the cytoplasm. It catalyses the reaction GTP + H2O = GDP + phosphate + H(+). In terms of biological role, involved in targeting and insertion of nascent membrane proteins into the cytoplasmic membrane. Binds to the hydrophobic signal sequence of the ribosome-nascent chain (RNC) as it emerges from the ribosomes. The SRP-RNC complex is then targeted to the cytoplasmic membrane where it interacts with the SRP receptor FtsY. This Pyrobaculum arsenaticum (strain DSM 13514 / JCM 11321 / PZ6) protein is Signal recognition particle 54 kDa protein.